We begin with the raw amino-acid sequence, 508 residues long: tRNA (guanine(37)-N(1))-methyltransferase (508 aa).

The N-terminal 53 residues, 1–53 (MKFNFWKGLWKPKSLTPTLSHRLYRRMYTPQPPLNREMTVLDRSKFTVSLNLA), are a transit peptide targeting the mitochondrion. His-253 contacts S-adenosyl-L-methionine. Residues 267–284 (RERKQQERAKRENHEKST) show a composition bias toward basic and acidic residues. Residues 267-291 (RERKQQERAKRENHEKSTETAVEPD) are disordered. S-adenosyl-L-methionine-binding positions include 323 to 324 (DL), 351 to 352 (DG), and Asn-402.

The protein belongs to the class I-like SAM-binding methyltransferase superfamily. TRM5/TYW2 family. As to quaternary structure, monomer.

It localises to the mitochondrion matrix. It is found in the nucleus. Its subcellular location is the cytoplasm. The enzyme catalyses guanosine(37) in tRNA + S-adenosyl-L-methionine = N(1)-methylguanosine(37) in tRNA + S-adenosyl-L-homocysteine + H(+). Its function is as follows. Specifically methylates the N1 position of guanosine-37 in various cytoplasmic and mitochondrial tRNAs. Methylation is not dependent on the nature of the nucleoside 5' of the target nucleoside. This is the first step in the biosynthesis of wybutosine (yW), a modified base adjacent to the anticodon of tRNAs and required for accurate decoding. In Yarrowia lipolytica (strain CLIB 122 / E 150) (Yeast), this protein is tRNA (guanine(37)-N(1))-methyltransferase.